The primary structure comprises 236 residues: UPF0173 metal-dependent hydrolase Mnod_3315 (236 aa).

It belongs to the UPF0173 family.

This Methylobacterium nodulans (strain LMG 21967 / CNCM I-2342 / ORS 2060) protein is UPF0173 metal-dependent hydrolase Mnod_3315.